Reading from the N-terminus, the 347-residue chain is FMRFamide-related peptides (347 aa).

A signal peptide spans 1–22; it reads MGIALMFLLALYQMQSAIHSEI. Residues 23–102 constitute a propeptide that is removed on maturation; sequence IDTPNYAGNS…RYKYDPELEA (80 aa). Phe114 carries the post-translational modification Phenylalanine amide. Tyr146 carries the tyrosine amide modification. Residues Phe157, Phe168, Phe179, Phe190, Phe201, Phe212, Phe223, and Phe232 each carry the phenylalanine amide modification. Residues 235 to 240 constitute a propeptide that is removed on maturation; that stretch reads SPHEEL. A phenylalanine amide mark is found at Phe250 and Phe259. Ser270 is subject to Serine amide. At Phe280 the chain carries Phenylalanine amide. The propeptide occupies 283–347; the sequence is SLKPAAPESK…SVEQDQFFGQ (65 aa). Residues 283 to 347 form a disordered region; it reads SLKPAAPESK…SVEQDQFFGQ (65 aa). Basic and acidic residues predominate over residues 305-320; sequence SPVDKAMTELFKKQEL. Positions 321–347 are enriched in polar residues; it reads QDQQVKNGAQATTTQDGSVEQDQFFGQ.

The protein belongs to the FARP (FMRFamide related peptide) family. This precursor includes 13 peptides that have FMRF or related sequences at their C-termini, and other putative neuropeptides.

It is found in the secreted. Functionally, in insects, FMRFamide and related peptides have modulatory actions at skeletal neuromuscular junctions, and peptides that are immunologically related to FMRFamide are released into the circulation from neurohemal organs. The sequence is that of FMRFamide-related peptides from Drosophila melanogaster (Fruit fly).